A 483-amino-acid chain; its full sequence is Cytochrome P450 71A23 (483 aa).

The helical transmembrane segment at 1–21 (MILFLCLIILFIITILFFKKH) threads the bilayer. Cys429 contributes to the heme binding site.

This sequence belongs to the cytochrome P450 family. Heme is required as a cofactor.

The protein localises to the membrane. The protein is Cytochrome P450 71A23 (CYP71A23) of Arabidopsis thaliana (Mouse-ear cress).